We begin with the raw amino-acid sequence, 65 residues long: Hainantoxin-X.2 (65 aa).

Residues 1–20 (MNVKILVLVAVLCLVVSTHA) form the signal peptide. Residues 21-37 (ERHSKTDMEDSPMIQER) constitute a propeptide that is removed on maturation. 3 disulfides stabilise this stretch: Cys-39-Cys-56, Cys-46-Cys-59, and Cys-55-Cys-64.

Belongs to the neurotoxin 36 family. 02 subfamily. In terms of tissue distribution, expressed by the venom gland.

The protein resides in the secreted. Reversibly blocks N-type calcium channels (Cav2.2/CACNA1B) in rat dorsal root ganglion cells. Elicits no toxic symptoms in either vertebrates or invertebrates during a period of 48 hours post-injection, when it was assayed in vivo by direct injection into mice and cockroaches. This chain is Hainantoxin-X.2, found in Cyriopagopus hainanus (Chinese bird spider).